A 345-amino-acid polypeptide reads, in one-letter code: Ribonucleoside-diphosphate reductase small chain 2 (345 aa).

N-acetylmethionine is present on methionine 1. The active site involves tyrosine 131. Phosphoserine occurs at positions 169 and 332. Phosphothreonine is present on threonine 334. The residue at position 336 (serine 336) is a Phosphoserine. Lysine 337 participates in a covalent cross-link: Glycyl lysine isopeptide (Lys-Gly) (interchain with G-Cter in ubiquitin).

It belongs to the ribonucleoside diphosphate reductase small chain family. Heterotetramer of two large (R1) and two small (R2) subunits. S.cerevisiae has two different R1 subunits (RNR1 and RNR3) and two different R2 subunits (RNR2 and RNR4). The functional form of the small subunits is a RNR2-RNR4 heterodimer, where RNR2 provides the iron-radical center and RNR4 is required for proper folding of RNR2 and assembly with the large subunits. Under normal growth conditions, the active form of the large subunits is a homodimer of the constitutively expressed RNR1. In damaged cells or cells arrested for DNA synthesis, the reductase consists of multiple species because of the association of the small subunits (RNR2-RNR4) with either the RNR1 homodimer or a heterodimer of RNR1 and the damage-inducible RNR3. Interacts with DIF1.

The protein resides in the nucleus. The catalysed reaction is a 2'-deoxyribonucleoside 5'-diphosphate + [thioredoxin]-disulfide + H2O = a ribonucleoside 5'-diphosphate + [thioredoxin]-dithiol. Provides the precursors necessary for DNA synthesis. Catalyzes the biosynthesis of deoxyribonucleotides from the corresponding ribonucleotides. RNR4 is required for proper folding of RNR2 and assembly with the large subunits. This is Ribonucleoside-diphosphate reductase small chain 2 (RNR4) from Saccharomyces cerevisiae (strain ATCC 204508 / S288c) (Baker's yeast).